Reading from the N-terminus, the 727-residue chain is Broad-complex core protein isoforms 1/2/3/4/5 (727 aa).

Residues valine 32–glutamine 97 enclose the BTB domain. Residues asparagine 135–leucine 149 are compositionally biased toward polar residues. Disordered regions lie at residues asparagine 135 to serine 185, arginine 218 to glycine 378, isoleucine 445 to alanine 496, proline 532 to proline 583, and serine 604 to leucine 626. The segment covering serine 227 to serine 238 has biased composition (low complexity). The span at threonine 281–asparagine 298 shows a compositional bias: gly residues. A compositionally biased stretch (basic and acidic residues) spans asparagine 341–asparagine 355. 3 stretches are compositionally biased toward low complexity: residues isoleucine 445–asparagine 460, threonine 475–threonine 495, and glutamine 533–glutamine 568. C2H2-type zinc fingers lie at residues phenylalanine 636–histidine 659 and proline 666–histidine 689. The disordered stretch occupies residues glutamine 694–serine 727. The segment covering histidine 713–serine 727 has biased composition (low complexity).

Its subcellular location is the nucleus. In terms of biological role, broad-complex proteins are required for puffing and transcription of salivary gland late genes during metamorphosis. The sequence is that of Broad-complex core protein isoforms 1/2/3/4/5 (br) from Drosophila melanogaster (Fruit fly).